The chain runs to 278 residues: MSDTEEQEYEEEQPEEEAAEEEEEAPEEPEPVAEPEEERPKPSRPVVPPLIPPKIPEGERVDFDDIHRKRMEKDLLELQTLIDVHFEQRKKEEEELVALKERIERRRSERAEQQRFRTEKERERQAKLAEEKMRKEEEEAKKRAEDDAKKKKVLSNMGAHFGGYLVKAEQKRGKRQTGREMKVRILSERKKPLDIDYMGEEQLRARSAWLPPSQPSCPAREKAQELSDWIHQLESEKFDLMAKLKQQKYEINVLYNRISHAQKFRKGAGKGRVGGRWK.

Residues 1–37 show a composition bias toward acidic residues; that stretch reads MSDTEEQEYEEEQPEEEAAEEEEEAPEEPEPVAEPEE. 2 disordered regions span residues 1–63 and 105–153; these read MSDT…RVDF and RRRS…KKKV. Serine 2 carries the post-translational modification Phosphoserine; by CK2. Residues 43-55 are compositionally biased toward pro residues; that stretch reads SRPVVPPLIPPKI. Basic and acidic residues predominate over residues 105 to 149; the sequence is RRRSERAEQQRFRTEKERERQAKLAEEKMRKEEEEAKKRAEDDAK.

The protein belongs to the troponin T family. Interacts with TPM3.

In terms of biological role, troponin T is the tropomyosin-binding subunit of troponin, the thin filament regulatory complex which confers calcium-sensitivity to striated muscle actomyosin ATPase activity. In Homo sapiens (Human), this protein is Troponin T, slow skeletal muscle (TNNT1).